A 63-amino-acid chain; its full sequence is Large ribosomal subunit protein bL32 (63 aa).

Positions 1–22 (MANPKAKMSKSRRDKRRAQFNA) are disordered. A compositionally biased stretch (basic residues) spans 7 to 18 (KMSKSRRDKRRA).

This sequence belongs to the bacterial ribosomal protein bL32 family.

The sequence is that of Large ribosomal subunit protein bL32 from Chlorobium limicola (strain DSM 245 / NBRC 103803 / 6330).